Here is a 325-residue protein sequence, read N- to C-terminus: MKVTIVELVVWLFSVNFFVVVAEESRWTLVDDHYGKNLHESVCYLRCLSNALNKLYSEGERRLFVNEEVYANASRILDDMEGKTGESTTYLSVVSSEMGGENNKLEKLISYGNAMGDLVAKVGGLFAEVNESVRAVREEIPSALIRANKYYTAIAEITRTVWDDVNRPLQQDKATCGDQKVTGVGELKTECGAHTCPLSDGVNESALQKYKGGCLEINVMSGSVSECFNLPRNKLYRSVALSSSHGFLKWYQDEAKRFQLGLRVKNIFGPLIASFGVGQPPSVLAEMINNITSLQSRFNEVHSNFTSILLADNLTADVDNTDSTI.

The signal sequence occupies residues Met-1–Glu-23. N-linked (GlcNAc...) asparagine glycans are attached at residues Asn-72, Asn-290, and Asn-313.

Functionally, not known but may be related to activation of the variant surface glycoprotein genes. The protein is VSG expression site-associated protein 117A of Trypanosoma brucei brucei.